The chain runs to 264 residues: MTMGDDLWGWQNINGSPYLTCALLAPWPHAFFTRAFYPQLPEQLITYLDPQGKAFRVKQVHGDVTLTATEIGQTPLAPDSTHPPADGIISDAPHQGVWVASADCTPVLIGDLIGKRVAAIHAGWRGTKARIVPKTIDKFLALGSELKDLRVALGPAIAGEVYQVDPWVALEVGQSVQAVQKLATEEQQWDHLSTMVNPPVLPDAEPEKYRLDVRRINQLQLLELGFAQEQIAVAPHCTFQMEELFFSYRRTHTKEVQWSGIVSY.

Positions 61, 104, and 121 each coordinate Zn(2+).

Belongs to the purine nucleoside phosphorylase YfiH/LACC1 family. Homodimer. It depends on Cu(2+) as a cofactor. The cofactor is Zn(2+).

The catalysed reaction is adenosine + phosphate = alpha-D-ribose 1-phosphate + adenine. It catalyses the reaction S-methyl-5'-thioadenosine + phosphate = 5-(methylsulfanyl)-alpha-D-ribose 1-phosphate + adenine. The enzyme catalyses inosine + phosphate = alpha-D-ribose 1-phosphate + hypoxanthine. It carries out the reaction adenosine + H2O + H(+) = inosine + NH4(+). Purine nucleoside enzyme that catalyzes the phosphorolysis of adenosine and inosine nucleosides, yielding D-ribose 1-phosphate and the respective free bases, adenine and hypoxanthine. Also catalyzes the phosphorolysis of S-methyl-5'-thioadenosine into adenine and S-methyl-5-thio-alpha-D-ribose 1-phosphate. Also has adenosine deaminase activity. This is Purine nucleoside phosphorylase slr1573 from Synechocystis sp. (strain ATCC 27184 / PCC 6803 / Kazusa).